Reading from the N-terminus, the 118-residue chain is Ribonuclease P protein component (118 aa).

Belongs to the RnpA family. In terms of assembly, consists of a catalytic RNA component (M1 or rnpB) and a protein subunit.

The catalysed reaction is Endonucleolytic cleavage of RNA, removing 5'-extranucleotides from tRNA precursor.. Its function is as follows. RNaseP catalyzes the removal of the 5'-leader sequence from pre-tRNA to produce the mature 5'-terminus. It can also cleave other RNA substrates such as 4.5S RNA. The protein component plays an auxiliary but essential role in vivo by binding to the 5'-leader sequence and broadening the substrate specificity of the ribozyme. The protein is Ribonuclease P protein component of Desulfatibacillum aliphaticivorans.